The sequence spans 301 residues: E3 ubiquitin-protein ligase RNF144B (301 aa).

Residues 26-242 (PLVTCKLCLC…YDKGPCRNKL (217 aa)) are TRIAD supradomain. Positions 30, 33, 53, 56, 121, 126, 145, 148, 153, 156, 161, 166, 191, and 194 each coordinate Zn(2+). Residues 30–80 (CKLCLCEQSLDKMTMLQECQCIFCTPCLKQYMVLSIREGCGSPITCPDMVC) form an RING-type 1 zinc finger. An IBR-type zinc finger spans residues 101–166 (QLYQRLKFER…KDAWHEESSC (66 aa)). The RING-type 2; atypical zinc-finger motif lies at 191–220 (CPVCRIYIERNEGCAQMMCKNCKHTFCWYC). C204 is a catalytic residue. Positions 209, 212, 217, 220, 232, and 238 each coordinate Zn(2+). The chain crosses the membrane as a helical span at residues 256 to 276 (VVGILVGLGVIALVTSPLLLL).

The protein belongs to the RBR family. RNF144 subfamily. Interacts with UBE2L3, UBE2L6 and LCMT2, as well as with BAX. Interacts with TBK1; this interaction inhibits TBK1 phosphorylation and 'Lys-63'-linked polyubiquitination. Post-translationally, auto-ubiquitinated.

The protein resides in the mitochondrion membrane. It localises to the cytoplasm. It carries out the reaction [E2 ubiquitin-conjugating enzyme]-S-ubiquitinyl-L-cysteine + [acceptor protein]-L-lysine = [E2 ubiquitin-conjugating enzyme]-L-cysteine + [acceptor protein]-N(6)-ubiquitinyl-L-lysine.. Its pathway is protein modification; protein ubiquitination. Functionally, E3 ubiquitin-protein ligase which accepts ubiquitin from E2 ubiquitin-conjugating enzymes UBE2L3 and UBE2L6 in the form of a thioester and then directly transfers the ubiquitin to targeted substrates such as LCMT2, thereby promoting their degradation. Induces apoptosis via a p53/TP53-dependent but caspase-independent mechanism. Plays a crucial role in maintaining the genomic stability by controlling the degradation of multiple proteins involved in mitotic progression and DNA damage. Regulates epithelial homeostasis by mediating degradation of CDKN1A and isoform 2 of TP63. Plays a regulatory role in innate immunity by negatively regulating IRF3 activation and IFN-beta production. Mechanistically, inhibits TBK1 phosphorylation and 'Lys-63'-linked polyubiquitination independently of its E3 ligase activity. Alternatively, promotes 'Lys-27' and 'Lys-33'-linked ubiquitination of IFIH1/MDA5, promoting selective autophagic degradation of IFIH1/MDA5 to inhibit antiviral response. The chain is E3 ubiquitin-protein ligase RNF144B (Rnf144b) from Mus musculus (Mouse).